The following is a 202-amino-acid chain: Proteasome subunit beta 1 (202 aa).

Positions 1–8 (MGEVVLPG) are cleaved as a propeptide — removed in mature form; by autocatalysis. Residue Thr-9 is the Nucleophile of the active site.

This sequence belongs to the peptidase T1B family. As to quaternary structure, the 20S proteasome core is composed of 14 alpha and 14 beta subunits that assemble into four stacked heptameric rings, resulting in a barrel-shaped structure. The two inner rings, each composed of seven catalytic beta subunits, are sandwiched by two outer rings, each composed of seven alpha subunits. The catalytic chamber with the active sites is on the inside of the barrel. Has a gated structure, the ends of the cylinder being occluded by the N-termini of the alpha-subunits. Is capped at one or both ends by the proteasome regulatory ATPase, PAN.

The protein localises to the cytoplasm. The enzyme catalyses Cleavage of peptide bonds with very broad specificity.. The formation of the proteasomal ATPase PAN-20S proteasome complex, via the docking of the C-termini of PAN into the intersubunit pockets in the alpha-rings, triggers opening of the gate for substrate entry. Interconversion between the open-gate and close-gate conformations leads to a dynamic regulation of the 20S proteasome proteolysis activity. Functionally, component of the proteasome core, a large protease complex with broad specificity involved in protein degradation. The polypeptide is Proteasome subunit beta 1 (Desulfurococcus amylolyticus (strain DSM 18924 / JCM 16383 / VKM B-2413 / 1221n) (Desulfurococcus kamchatkensis)).